The primary structure comprises 188 residues: dCTP deaminase (188 aa).

DCTP is bound by residues Lys-111 to Arg-116, Thr-135 to Glu-137, Gln-156, Tyr-170, and Gln-180. The active-site Proton donor/acceptor is the Glu-137.

The protein belongs to the dCTP deaminase family. Homotrimer.

The enzyme catalyses dCTP + H2O + H(+) = dUTP + NH4(+). It functions in the pathway pyrimidine metabolism; dUMP biosynthesis; dUMP from dCTP (dUTP route): step 1/2. Its function is as follows. Catalyzes the deamination of dCTP to dUTP. The polypeptide is dCTP deaminase (Cupriavidus pinatubonensis (strain JMP 134 / LMG 1197) (Cupriavidus necator (strain JMP 134))).